Here is a 534-residue protein sequence, read N- to C-terminus: Benzaldehyde dehydrogenase, mitochondrial (534 aa).

Residues 1–29 constitute a mitochondrion transit peptide; the sequence is MAAHRFSSLLSRSVPLLSRGGKQSYLGRG. NAD(+)-binding positions include 199–202, 225–228, 258–259, 278–279, and 301–303; these read IPWN, KTAE, GP, GS, and ELG. Glutamate 301 (proton acceptor) is an active-site residue. The active-site Nucleophile is cysteine 335. NAD(+) contacts are provided by residues 381 to 385 and 432 to 434; these read DQFEK and EIF.

This sequence belongs to the aldehyde dehydrogenase family. Homotetramer. In terms of tissue distribution, expressed predominantly in the upper and lower flower petal lobes, and, at low levels, in flower tubes, pistils, stamens and sepals.

It is found in the mitochondrion. It catalyses the reaction an aldehyde + NAD(+) + H2O = a carboxylate + NADH + 2 H(+). It carries out the reaction acetaldehyde + NAD(+) + H2O = acetate + NADH + 2 H(+). The catalysed reaction is benzaldehyde + NAD(+) + H2O = benzoate + NADH + 2 H(+). The enzyme catalyses 2-phenylacetaldehyde + NAD(+) + H2O = 2-phenylacetate + NADH + 2 H(+). It participates in aromatic compound metabolism. With respect to regulation, inhibited by disulfiram. Its function is as follows. Component of the floral volatile benzenoid/phenylpropanoid (FVBP) biosynthetic pathway. Catalyzes the oxidation of benzaldehyde to benzoic acid (BA). Capable of oxidizing a broad spectrum of aliphatic aldehydes; increased carbon chain length results in a decrease in its efficiency. In Antirrhinum majus (Garden snapdragon), this protein is Benzaldehyde dehydrogenase, mitochondrial.